Reading from the N-terminus, the 369-residue chain is GTPase Obg (369 aa).

The Obg domain occupies methionine 1–isoleucine 158. The interval asparagine 126–glycine 146 is disordered. The segment covering histidine 128 to threonine 138 has biased composition (polar residues). Residues alanine 159–glutamine 362 form the OBG-type G domain. Residues glycine 165 to serine 172, phenylalanine 190 to threonine 194, aspartate 212 to glycine 215, threonine 280 to aspartate 283, and serine 343 to alanine 345 contribute to the GTP site. Residues serine 172 and threonine 192 each contribute to the Mg(2+) site.

Belongs to the TRAFAC class OBG-HflX-like GTPase superfamily. OBG GTPase family. As to quaternary structure, monomer. Mg(2+) is required as a cofactor.

It is found in the cytoplasm. In terms of biological role, an essential GTPase which binds GTP, GDP and possibly (p)ppGpp with moderate affinity, with high nucleotide exchange rates and a fairly low GTP hydrolysis rate. Plays a role in control of the cell cycle, stress response, ribosome biogenesis and in those bacteria that undergo differentiation, in morphogenesis control. This is GTPase Obg from Sulfurimonas denitrificans (strain ATCC 33889 / DSM 1251) (Thiomicrospira denitrificans (strain ATCC 33889 / DSM 1251)).